The primary structure comprises 84 residues: MYB-like transcription factor TCL1 (84 aa).

One can recognise a Myb-like domain in the interval 36-73; sequence TEQEEDLIFRMYRLVGDRWDLIARRVVGREAKEIERYW.

Expressed in inflorescences and trichomes of rosette and cauline leaves.

The protein resides in the nucleus. In terms of biological role, MYB-type transcription factor involved in trichome cell specification. Acts as a negative regulator of trichome patterning and formation by direct binding to the cis-acting regulatory elements of GL1, thus suppressing the expression of GL1. This Arabidopsis thaliana (Mouse-ear cress) protein is MYB-like transcription factor TCL1 (TCL1).